The chain runs to 252 residues: Imidazole glycerol phosphate synthase subunit HisF (252 aa).

Active-site residues include aspartate 11 and aspartate 130.

Belongs to the HisA/HisF family. Heterodimer of HisH and HisF.

Its subcellular location is the cytoplasm. It carries out the reaction 5-[(5-phospho-1-deoxy-D-ribulos-1-ylimino)methylamino]-1-(5-phospho-beta-D-ribosyl)imidazole-4-carboxamide + L-glutamine = D-erythro-1-(imidazol-4-yl)glycerol 3-phosphate + 5-amino-1-(5-phospho-beta-D-ribosyl)imidazole-4-carboxamide + L-glutamate + H(+). Its pathway is amino-acid biosynthesis; L-histidine biosynthesis; L-histidine from 5-phospho-alpha-D-ribose 1-diphosphate: step 5/9. In terms of biological role, IGPS catalyzes the conversion of PRFAR and glutamine to IGP, AICAR and glutamate. The HisF subunit catalyzes the cyclization activity that produces IGP and AICAR from PRFAR using the ammonia provided by the HisH subunit. The protein is Imidazole glycerol phosphate synthase subunit HisF of Bacillus anthracis (strain CDC 684 / NRRL 3495).